The chain runs to 141 residues: Large ribosomal subunit protein uL11 (141 aa).

It belongs to the universal ribosomal protein uL11 family. In terms of assembly, part of the ribosomal stalk of the 50S ribosomal subunit. Interacts with L10 and the large rRNA to form the base of the stalk. L10 forms an elongated spine to which L12 dimers bind in a sequential fashion forming a multimeric L10(L12)X complex. Post-translationally, one or more lysine residues are methylated.

Forms part of the ribosomal stalk which helps the ribosome interact with GTP-bound translation factors. The chain is Large ribosomal subunit protein uL11 from Pediococcus pentosaceus (strain ATCC 25745 / CCUG 21536 / LMG 10740 / 183-1w).